Consider the following 159-residue polypeptide: Large ribosomal subunit protein uL10 (159 aa).

This sequence belongs to the universal ribosomal protein uL10 family. In terms of assembly, part of the ribosomal stalk of the 50S ribosomal subunit. The N-terminus interacts with L11 and the large rRNA to form the base of the stalk. The C-terminus forms an elongated spine to which L12 dimers bind in a sequential fashion forming a multimeric L10(L12)X complex.

In terms of biological role, forms part of the ribosomal stalk, playing a central role in the interaction of the ribosome with GTP-bound translation factors. The chain is Large ribosomal subunit protein uL10 from Nautilia profundicola (strain ATCC BAA-1463 / DSM 18972 / AmH).